A 633-amino-acid chain; its full sequence is Rab11 family-interacting protein 4 (633 aa).

EF-hand domains follow at residues 17 to 52 and 50 to 85; these read LFLQRLRQVFDACDGDADGFIKVEHFVALGLQFAQG and AQGDEVKKLAKRLDPNAQGRIGFKDFCHGVLAMKGC. Asp30, Asp32, Asp34, Asp63, Asn65, Arg69, and Asp74 together coordinate Ca(2+). 2 disordered regions span residues 152–182 and 218–257; these read SDLDSAMYSTPSSEASDEGRNEDKAGGLGSL and GEGEDIDYSPGSPCPDDESRTNALSDLGSSVPSSAGQTPR. Residues 238 to 254 are compositionally biased toward polar residues; that stretch reads TNALSDLGSSVPSSAGQ. The stretch at 410–613 forms a coiled coil; the sequence is AREKGTEIVL…EEINYRLRQY (204 aa). The FIP-RBD domain maps to 570-632; that stretch reads EAKSLFSTQT…DHNPSILEIK (63 aa).

Homodimer. Forms a complex with Rab11 (rab11a or rab11b) and arf6.

Its subcellular location is the recycling endosome membrane. It localises to the cleavage furrow. The protein localises to the midbody. The protein resides in the cytoplasmic vesicle. Functionally, acts as a regulator of endocytic traffic by participating in membrane delivery. Required for the abscission step in cytokinesis, possibly by acting as an 'address tag' delivering recycling endosome membranes to the cleavage furrow during late cytokinesis. This Xenopus tropicalis (Western clawed frog) protein is Rab11 family-interacting protein 4 (rab11fip4).